The chain runs to 83 residues: ATP synthase subunit c (83 aa).

The next 2 helical transmembrane spans lie at 10–30 (IAVALLIGMGALGTAIGFGLL) and 52–72 (MFIVAGLLDAVTMIGVGIALF).

The protein belongs to the ATPase C chain family. As to quaternary structure, F-type ATPases have 2 components, F(1) - the catalytic core - and F(0) - the membrane proton channel. F(1) has five subunits: alpha(3), beta(3), gamma(1), delta(1), epsilon(1). F(0) has three main subunits: a(1), b(2) and c(10-14). The alpha and beta chains form an alternating ring which encloses part of the gamma chain. F(1) is attached to F(0) by a central stalk formed by the gamma and epsilon chains, while a peripheral stalk is formed by the delta and b chains.

It localises to the cell inner membrane. Functionally, f(1)F(0) ATP synthase produces ATP from ADP in the presence of a proton or sodium gradient. F-type ATPases consist of two structural domains, F(1) containing the extramembraneous catalytic core and F(0) containing the membrane proton channel, linked together by a central stalk and a peripheral stalk. During catalysis, ATP synthesis in the catalytic domain of F(1) is coupled via a rotary mechanism of the central stalk subunits to proton translocation. Key component of the F(0) channel; it plays a direct role in translocation across the membrane. A homomeric c-ring of between 10-14 subunits forms the central stalk rotor element with the F(1) delta and epsilon subunits. This is ATP synthase subunit c from Shewanella loihica (strain ATCC BAA-1088 / PV-4).